The chain runs to 397 residues: Succinate--CoA ligase [ADP-forming] subunit beta (397 aa).

Residues 9-254 (KALLKGYGAP…ETEEDAKEIE (246 aa)) enclose the ATP-grasp domain. ATP-binding positions include Lys46, 53–55 (GRG), Glu109, Ala112, and Glu117. 2 residues coordinate Mg(2+): Asn209 and Asp223. Residues Asn274 and 331–333 (GIM) each bind substrate.

It belongs to the succinate/malate CoA ligase beta subunit family. Heterotetramer of two alpha and two beta subunits. Requires Mg(2+) as cofactor.

The enzyme catalyses succinate + ATP + CoA = succinyl-CoA + ADP + phosphate. The catalysed reaction is GTP + succinate + CoA = succinyl-CoA + GDP + phosphate. The protein operates within carbohydrate metabolism; tricarboxylic acid cycle; succinate from succinyl-CoA (ligase route): step 1/1. Its function is as follows. Succinyl-CoA synthetase functions in the citric acid cycle (TCA), coupling the hydrolysis of succinyl-CoA to the synthesis of either ATP or GTP and thus represents the only step of substrate-level phosphorylation in the TCA. The beta subunit provides nucleotide specificity of the enzyme and binds the substrate succinate, while the binding sites for coenzyme A and phosphate are found in the alpha subunit. The sequence is that of Succinate--CoA ligase [ADP-forming] subunit beta from Rhizobium etli (strain CIAT 652).